The following is a 261-amino-acid chain: MLLGVNIDHIAVLREARKINDPNPLDALSICKLSGAEQITIHLREDRRHIHDNDAKAIIEQSSLPVNLECSINSDIIDIVCKLKPSRATLVPENRNEVTTEGGLDIKGNFEKLQKVIDKLHANEIEVSLFIDPKDEIIELSKELEVEWIELHTGTFANIYAMLYSNLASTHHSIKELELSKSELKTKLSKSIKQIETSSKLAKKLGLKVAAGHGLNYQNVTLISKIPEIEELNIGQSIIARSVFTGLKQAIIDMKELIKND.

N6 is a 3-amino-2-oxopropyl phosphate binding site. 8–9 (DH) provides a ligand contact to 1-deoxy-D-xylulose 5-phosphate. Residue R17 coordinates 3-amino-2-oxopropyl phosphate. The active-site Proton acceptor is H42. R44 and H49 together coordinate 1-deoxy-D-xylulose 5-phosphate. Residue E69 is the Proton acceptor of the active site. 1-deoxy-D-xylulose 5-phosphate is bound at residue T99. Residue H213 is the Proton donor of the active site. Residues G214 and 235–236 (GQ) contribute to the 3-amino-2-oxopropyl phosphate site.

This sequence belongs to the PNP synthase family. In terms of assembly, homooctamer; tetramer of dimers.

The protein resides in the cytoplasm. It catalyses the reaction 3-amino-2-oxopropyl phosphate + 1-deoxy-D-xylulose 5-phosphate = pyridoxine 5'-phosphate + phosphate + 2 H2O + H(+). It participates in cofactor biosynthesis; pyridoxine 5'-phosphate biosynthesis; pyridoxine 5'-phosphate from D-erythrose 4-phosphate: step 5/5. In terms of biological role, catalyzes the complicated ring closure reaction between the two acyclic compounds 1-deoxy-D-xylulose-5-phosphate (DXP) and 3-amino-2-oxopropyl phosphate (1-amino-acetone-3-phosphate or AAP) to form pyridoxine 5'-phosphate (PNP) and inorganic phosphate. The polypeptide is Pyridoxine 5'-phosphate synthase (Aliarcobacter butzleri (strain RM4018) (Arcobacter butzleri)).